The following is a 231-amino-acid chain: MEGCVSNIMICNLAYSGKLDELKERILADKSLATRTDQDSRTALHWACSAGHTEIVEFLLQLGVPVNDKDDAGWSPLHIAASAGRDEIVKALLVKGAHVNAVNQNGCTPLHYAASKNRHEIAVMLLEGGANPDAKDHYDATAMHRAAAKGNLKMVHILLFYKASTNIQDTEGNTPLHLACDEERVEEAKFLVTQGASIYIENKEEKTPLQVAKGGLGLILKRLAESEEASM.

7 ANK repeats span residues 3 to 36, 37 to 69, 70 to 102, 103 to 135, 136 to 168, 169 to 201, and 202 to 226; these read GCVS…ATRT, DQDS…VNDK, DDAG…VNAV, NQNG…PDAK, DHYD…TNIQ, DTEG…IYIE, and NKEE…LAES.

In terms of assembly, part of transient complex containing PSMD10, PSMC4, PSMC5 and PAAF1 formed during the assembly of the 26S proteasome. Stays associated throughout the assembly of the PA700/19S RC and is released upon association with the 20S core. Interacts with PSMC4. Interacts with RB1. Interacts with CDK4. Interacts with MDM2. Interacts with RELA. Associates with a CDK4:CCND2 serine/threonine kinase complex. Interacts with ARHGDIA and increases the interaction between ARHGDIA and RHOA, hence promotes ARHGDIA inactivation of RHOA and ROCK.

It is found in the cytoplasm. The protein localises to the nucleus. Functionally, acts as a chaperone during the assembly of the 26S proteasome, specifically of the PA700/19S regulatory complex (RC). In the initial step of the base subcomplex assembly is part of an intermediate PSMD10:PSMC4:PSMC5:PAAF1 module which probably assembles with a PSMD5:PSMC2:PSMC1:PSMD2 module. Independently of the proteasome, regulates EGF-induced AKT activation through inhibition of the RHOA/ROCK/PTEN pathway, leading to prolonged AKT activation. Plays an important role in RAS-induced tumorigenesis. Acts as an oncoprotein by being involved in negative regulation of tumor suppressors RB1 and p53/TP53. Overexpression is leading to phosphorylation of RB1 and proteasomal degradation of RB1. Regulates CDK4-mediated phosphorylation of RB1 by competing with CDKN2A for binding with CDK4. Facilitates binding of MDM2 to p53/TP53 and the mono- and polyubiquitination of p53/TP53 by MDM2 suggesting a function in targeting the TP53:MDM2 complex to the 26S proteasome. Involved in p53-independent apoptosis. Involved in regulation of NF-kappa-B by retaining it in the cytoplasm. Binds to the NF-kappa-B component RELA and accelerates its XPO1/CRM1-mediated nuclear export. This chain is 26S proteasome non-ATPase regulatory subunit 10 (Psmd10), found in Mus musculus (Mouse).